The sequence spans 265 residues: tRNA pseudouridine synthase A (265 aa).

Residue aspartate 58 is the Nucleophile of the active site. Tyrosine 116 provides a ligand contact to substrate.

The protein belongs to the tRNA pseudouridine synthase TruA family. In terms of assembly, homodimer.

It carries out the reaction uridine(38/39/40) in tRNA = pseudouridine(38/39/40) in tRNA. Its function is as follows. Formation of pseudouridine at positions 38, 39 and 40 in the anticodon stem and loop of transfer RNAs. This is tRNA pseudouridine synthase A from Neisseria gonorrhoeae (strain NCCP11945).